Consider the following 221-residue polypeptide: Ribosomal RNA small subunit methyltransferase G (221 aa).

S-adenosyl-L-methionine-binding positions include glycine 90, leucine 95, 141-142 (VE), and arginine 154.

It belongs to the methyltransferase superfamily. RNA methyltransferase RsmG family.

The protein resides in the cytoplasm. It catalyses the reaction guanosine(527) in 16S rRNA + S-adenosyl-L-methionine = N(7)-methylguanosine(527) in 16S rRNA + S-adenosyl-L-homocysteine. Its function is as follows. Specifically methylates the N7 position of guanine in position 527 of 16S rRNA. In Polaromonas naphthalenivorans (strain CJ2), this protein is Ribosomal RNA small subunit methyltransferase G.